We begin with the raw amino-acid sequence, 344 residues long: Arginine N-succinyltransferase (344 aa).

Leu125 serves as a coordination point for succinyl-CoA. The Proton donor role is filled by His229.

The protein belongs to the arginine N-succinyltransferase family.

The catalysed reaction is succinyl-CoA + L-arginine = N(2)-succinyl-L-arginine + CoA + H(+). The protein operates within amino-acid degradation; L-arginine degradation via AST pathway; L-glutamate and succinate from L-arginine: step 1/5. Functionally, catalyzes the transfer of succinyl-CoA to arginine to produce N(2)-succinylarginine. This Salmonella typhi protein is Arginine N-succinyltransferase.